Consider the following 291-residue polypeptide: Pyridoxal 5'-phosphate synthase subunit PdxS (291 aa).

D-ribose 5-phosphate is bound at residue Asp-23. Residue Lys-80 is the Schiff-base intermediate with D-ribose 5-phosphate of the active site. Gly-152 contacts D-ribose 5-phosphate. A D-glyceraldehyde 3-phosphate-binding site is contributed by Arg-164. D-ribose 5-phosphate contacts are provided by residues Gly-213 and 234 to 235; that span reads GS.

The protein belongs to the PdxS/SNZ family. As to quaternary structure, in the presence of PdxT, forms a dodecamer of heterodimers.

The enzyme catalyses aldehydo-D-ribose 5-phosphate + D-glyceraldehyde 3-phosphate + L-glutamine = pyridoxal 5'-phosphate + L-glutamate + phosphate + 3 H2O + H(+). It functions in the pathway cofactor biosynthesis; pyridoxal 5'-phosphate biosynthesis. Its function is as follows. Catalyzes the formation of pyridoxal 5'-phosphate from ribose 5-phosphate (RBP), glyceraldehyde 3-phosphate (G3P) and ammonia. The ammonia is provided by the PdxT subunit. Can also use ribulose 5-phosphate and dihydroxyacetone phosphate as substrates, resulting from enzyme-catalyzed isomerization of RBP and G3P, respectively. This chain is Pyridoxal 5'-phosphate synthase subunit PdxS, found in Bifidobacterium longum (strain NCC 2705).